We begin with the raw amino-acid sequence, 161 residues long: Bacterial E2-like ubiquitin protein BilB (161 aa).

Catalysis depends on cysteine 113, which acts as the Glycyl thioester intermediate.

In terms of biological role, component of the Bil (bacterial ISG15-like) antiviral defense system, composed of BilA, BilB, BilC and BilD. The Bil system specifically conjugates a ubiquitin-like moiety (bilA) to the bacteriophage central tail fiber (CTF, or tip attachment protein J) via reactions involving E1 (bilD) and E2 (bilB). Modifies CTF of phage SECphi27 and SECphi4, which probably interferes with assembly of the phage tail. Also modifies T5 baseplate hub protein pb3 (gene D16), but not gp27 of phage T6 (Bil defends against T6). BilB probably accepts ubiquitin from the BilA-BilD (E1) complex and catalyzes its covalent attachment to target protein (CTF). Bil-encoding bacteria produce mostly defective phage SECphi27, many of which have phage assembly defects, including no tails. SECphi27 phage progeny produced in E.coli with the Bil system inject less DNA into naive host cells, maybe because the phage are less able to adsorb and inject their DNA into host cells. Its function is as follows. Expression of the Bil system in E.coli (strain MG1655) confers about 100-fold resistance to phage SECphi27, SECphi18, SECphi6, SECphi4 and T5, but not to SECphi17. When cells expressing the Bil system are infected by phage SECphi27 at low multiplicity of infection (0.03 MOI) the culture survives, at 3.0 MOI the culture collapses at the same time as cells without the Bil system. This chain is Bacterial E2-like ubiquitin protein BilB, found in Collimonas sp. (strain OK412).